We begin with the raw amino-acid sequence, 294 residues long: Nucleotide-binding protein CLD_1131 (294 aa).

8 to 15 (GLSGAGKT) contributes to the ATP binding site. 59–62 (DIRG) is a binding site for GTP.

It belongs to the RapZ-like family.

Displays ATPase and GTPase activities. The sequence is that of Nucleotide-binding protein CLD_1131 from Clostridium botulinum (strain Okra / Type B1).